Consider the following 148-residue polypeptide: MEQTFIMIKPDGVQSGLVGEIIGRFEKKGFSLKGLKLLTVDRAFAEKHYADLSSKPFFNGLVEYIVSGPVVAMVWEGKNVVTTGREIIGATNPAESAPGTIRGDFAIDIGRNVIHGSDAVESARKVIGLWFPEGVANWSSSLHPWIYE.

6 residues coordinate ATP: Lys9, Phe57, Arg85, Thr91, Arg102, and Asn112. His115 serves as the catalytic Pros-phosphohistidine intermediate.

This sequence belongs to the NDK family. Mg(2+) is required as a cofactor.

It carries out the reaction a 2'-deoxyribonucleoside 5'-diphosphate + ATP = a 2'-deoxyribonucleoside 5'-triphosphate + ADP. It catalyses the reaction a ribonucleoside 5'-diphosphate + ATP = a ribonucleoside 5'-triphosphate + ADP. In terms of biological role, major role in the synthesis of nucleoside triphosphates other than ATP. The ATP gamma phosphate is transferred to the NDP beta phosphate via a ping-pong mechanism, using a phosphorylated active-site intermediate. The chain is Nucleoside diphosphate kinase A from Flaveria bidentis (Coastal plain yellowtops).